We begin with the raw amino-acid sequence, 433 residues long: Protein translocase subunit SecY (433 aa).

10 consecutive transmembrane segments (helical) span residues 17–37 (IVFT…PIPG), 71–91 (IFAL…LMSV), 117–137 (LTVL…ESIV), 141–161 (GPVV…TLVV), 184–204 (LIIF…MFEL), 212–232 (PLIA…IIFF), 268–288 (GVIP…LANF), 310–330 (YILL…AIVF), 366–386 (LTVI…LLMN), and 388–408 (YVIS…VVLD).

The protein belongs to the SecY/SEC61-alpha family. As to quaternary structure, component of the Sec protein translocase complex. Heterotrimer consisting of SecY, SecE and SecG subunits. The heterotrimers can form oligomers, although 1 heterotrimer is thought to be able to translocate proteins. Interacts with the ribosome. Interacts with SecDF, and other proteins may be involved. Interacts with SecA.

The protein localises to the cell inner membrane. In terms of biological role, the central subunit of the protein translocation channel SecYEG. Consists of two halves formed by TMs 1-5 and 6-10. These two domains form a lateral gate at the front which open onto the bilayer between TMs 2 and 7, and are clamped together by SecE at the back. The channel is closed by both a pore ring composed of hydrophobic SecY resides and a short helix (helix 2A) on the extracellular side of the membrane which forms a plug. The plug probably moves laterally to allow the channel to open. The ring and the pore may move independently. In Rickettsia felis (strain ATCC VR-1525 / URRWXCal2) (Rickettsia azadi), this protein is Protein translocase subunit SecY.